Reading from the N-terminus, the 163-residue chain is Globin CTT-Z (163 aa).

Positions 1-16 are cleaved as a signal peptide; the sequence is MKFFAVLALCIVGAIA. One can recognise a Globin domain in the interval 18–162; it reads PLTSDEAALV…VYTAVFQIVT (145 aa). Heme b contacts are provided by His-76 and His-111.

The protein belongs to the globin family.

This chain is Globin CTT-Z (CTT-Z), found in Chironomus thummi piger (Midge).